Consider the following 312-residue polypeptide: Very-long-chain 3-oxoacyl-CoA reductase (312 aa).

A helical membrane pass occupies residues 4 to 24; it reads APPAAGFLYWVGASTIAYLAL. 50–79 contacts NADP(+); that stretch reads GEWAVVTGGTDGIGKAYAEELAKRGMKIVL. Transmembrane regions (helical) follow at residues 182 to 202 and 269 to 285; these read GVIL…LTIY and TTGY…NSIM. Residue Ser-189 coordinates substrate. Tyr-202 functions as the Proton acceptor in the catalytic mechanism. The short motif at 308–312 is the Di-lysine motif element; sequence KRKKN.

The protein belongs to the short-chain dehydrogenases/reductases (SDR) family. 17-beta-HSD 3 subfamily. Expressed in most tissues tested.

The protein resides in the endoplasmic reticulum membrane. It carries out the reaction a very-long-chain (3R)-3-hydroxyacyl-CoA + NADP(+) = a very-long-chain 3-oxoacyl-CoA + NADPH + H(+). The enzyme catalyses 17beta-estradiol + NAD(+) = estrone + NADH + H(+). The catalysed reaction is 17beta-estradiol + NADP(+) = estrone + NADPH + H(+). It catalyses the reaction 3-oxooctadecanoyl-CoA + NADPH + H(+) = (3R)-hydroxyoctadecanoyl-CoA + NADP(+). It carries out the reaction (7Z,10Z,13Z,16Z)-3-oxodocosatetraenoyl-CoA + NADPH + H(+) = (3R)-hydroxy-(7Z,10Z,13Z,16Z)-docosatetraenoyl-CoA + NADP(+). The enzyme catalyses 3-oxo-(7Z,10Z,13Z,16Z,19Z)-docosapentaenoyl-CoA + NADPH + H(+) = (3R)-hydroxy-(7Z,10Z,13Z,16Z,19Z)-docosapentaenoyl-CoA + NADP(+). The catalysed reaction is (8Z,11Z,14Z)-3-oxoeicosatrienoyl-CoA + NADPH + H(+) = (3R)-hydroxy-(8Z,11Z,14Z)-eicosatrienoyl-CoA + NADP(+). Its pathway is lipid metabolism; fatty acid biosynthesis. It functions in the pathway steroid biosynthesis; estrogen biosynthesis. Catalyzes the second of the four reactions of the long-chain fatty acids elongation cycle. This endoplasmic reticulum-bound enzymatic process, allows the addition of two carbons to the chain of long- and very long-chain fatty acids/VLCFAs per cycle. This enzyme has a 3-ketoacyl-CoA reductase activity, reducing 3-ketoacyl-CoA to 3-hydroxyacyl-CoA, within each cycle of fatty acid elongation. Thereby, it may participate in the production of VLCFAs of different chain lengths that are involved in multiple biological processes as precursors of membrane lipids and lipid mediators. May also catalyze the transformation of estrone (E1) into estradiol (E2) and play a role in estrogen formation. In Mus musculus (Mouse), this protein is Very-long-chain 3-oxoacyl-CoA reductase.